A 398-amino-acid polypeptide reads, in one-letter code: Elongation factor Tu (398 aa).

Residues 10 to 208 (KPHVNVGTIG…ALDSHIPEPT (199 aa)) enclose the tr-type G domain. The tract at residues 19-26 (GHIDHGKT) is G1. 19 to 26 (GHIDHGKT) provides a ligand contact to GTP. T26 lines the Mg(2+) pocket. The segment at 60-64 (TKTVT) is G2. Residues 83–86 (DCPG) are G3. GTP contacts are provided by residues 83–87 (DCPGH) and 138–141 (NKCD). Residues 138–141 (NKCD) form a G4 region. Residues 176–178 (SSL) are G5.

Belongs to the TRAFAC class translation factor GTPase superfamily. Classic translation factor GTPase family. EF-Tu/EF-1A subfamily. As to quaternary structure, monomer.

The protein localises to the cytoplasm. It catalyses the reaction GTP + H2O = GDP + phosphate + H(+). Its function is as follows. GTP hydrolase that promotes the GTP-dependent binding of aminoacyl-tRNA to the A-site of ribosomes during protein biosynthesis. The sequence is that of Elongation factor Tu from Rhodopirellula baltica (strain DSM 10527 / NCIMB 13988 / SH1).